Consider the following 131-residue polypeptide: Runt-related transcription factor 2 (131 aa).

Positions 1 to 10 constitute a Runt domain; sequence MRVGVPPQIP. Residues 1 to 75 form a disordered region; that stretch reads MRVGVPPQIP…SSTRGTGLPV (75 aa). Arg-11 bears the Asymmetric dimethylarginine mark. 2 stretches are compositionally biased toward polar residues: residues 13–36 and 43–70; these read SLNSAPSPFNPQGQSQITDPRQAQ and YDQSYPSYLSQMTSPSIHSTTPLSSTRG.

Heterodimer of an alpha and a beta subunit. The alpha subunit binds DNA as a monomer and through the Runt domain. DNA-binding is increased by heterodimerization. Interacts with XRCC6 (Ku70) and XRCC5 (Ku80). Interacts with CCNB1, KAT6A and KAT6B. Interacts with HIVEP3. Interacts with IFI204. Interaction with SATB2; the interaction results in enhanced DNA binding and transactivation by these transcription factors. Binds to HIPK3. Interacts with FOXO1 (via a C-terminal region); the interaction inhibits RUNX2 transcriptional activity towards BGLAP. This interaction is prevented on insulin or IGF1 stimulation as FOXO1 is exported from the nucleus. Interacts with FOXP3. Interacts with TMEM119. Interacts with OLFM2. Interacts with IPO7; the interaction inhibits RUNX2 nuclear translocation in osteoblasts. Phosphorylated; probably by MAP kinases (MAPK). Phosphorylation by HIPK3 is required for the SPEN/MINT and FGF2 transactivation during osteoblastic differentiation.

The protein resides in the nucleus. It is found in the cytoplasm. Transcription factor involved in osteoblastic differentiation and skeletal morphogenesis. Essential for the maturation of osteoblasts and both intramembranous and endochondral ossification. CBF binds to the core site, 5'-PYGPYGGT-3', of a number of enhancers and promoters, including murine leukemia virus, polyomavirus enhancer, T-cell receptor enhancers, osteocalcin, osteopontin, bone sialoprotein, alpha 1(I) collagen, LCK, IL-3 and GM-CSF promoters. Inhibits KAT6B-dependent transcriptional activation. In osteoblasts, supports transcription activation: synergizes with SPEN/MINT to enhance FGFR2-mediated activation of the osteocalcin FGF-responsive element (OCFRE). This Equus caballus (Horse) protein is Runt-related transcription factor 2 (RUNX2).